The following is a 349-amino-acid chain: Bifunctional nitrilase/nitrile hydratase NIT4A (349 aa).

Residues 29–301 (VRATVVQAST…EALISADLDL (273 aa)) enclose the CN hydrolase domain. The Proton acceptor role is filled by glutamate 69. Residue lysine 156 is part of the active site. Catalysis depends on cysteine 190, which acts as the Nucleophile.

This sequence belongs to the carbon-nitrogen hydrolase superfamily. Nitrilase family. As to expression, ubiquitous.

It carries out the reaction L-asparagine = 3-cyano-L-alanine + H2O. It catalyses the reaction 3-cyano-L-alanine + 2 H2O = L-aspartate + NH4(+). Involved in the cyanide detoxification pathway. Has nitrilase and nitrile-hydratase activity in the ratio 4.0:1, producing both asparagine and aspartic acid from beta-cyano-L-alanine (Ala(CN)). Can also use 3-phenylpropionitrile as substrate, but not indole-3-acetonitrile. The sequence is that of Bifunctional nitrilase/nitrile hydratase NIT4A (NIT4A) from Lupinus angustifolius (Narrow-leaved blue lupine).